The following is a 193-amino-acid chain: Molybdenum cofactor guanylyltransferase (193 aa).

GTP-binding positions include 8–10, Lys-21, Asp-67, and Asp-98; that span reads LAG. Asp-98 is a Mg(2+) binding site.

This sequence belongs to the MobA family. Monomer. Mg(2+) serves as cofactor.

It localises to the cytoplasm. The catalysed reaction is Mo-molybdopterin + GTP + H(+) = Mo-molybdopterin guanine dinucleotide + diphosphate. Functionally, transfers a GMP moiety from GTP to Mo-molybdopterin (Mo-MPT) cofactor (Moco or molybdenum cofactor) to form Mo-molybdopterin guanine dinucleotide (Mo-MGD) cofactor. The polypeptide is Molybdenum cofactor guanylyltransferase (Cereibacter sphaeroides (strain ATCC 17029 / ATH 2.4.9) (Rhodobacter sphaeroides)).